We begin with the raw amino-acid sequence, 77 residues long: MPKKIHPTWYPEAKVICNGELVMTVGSTKPEIHVEVWSGNHPFYTGTQKMIDTEGRVDRFLRKYKMGDKSSKKADQK.

The protein belongs to the bacterial ribosomal protein bL31 family. Type A subfamily. In terms of assembly, part of the 50S ribosomal subunit.

Its function is as follows. Binds the 23S rRNA. The polypeptide is Large ribosomal subunit protein bL31 (Microcystis aeruginosa (strain NIES-843 / IAM M-2473)).